A 343-amino-acid chain; its full sequence is Endoglucanase C (343 aa).

The active-site Proton donor is the E140. Residue E280 is the Nucleophile of the active site.

Belongs to the glycosyl hydrolase 5 (cellulase A) family.

It carries out the reaction Endohydrolysis of (1-&gt;4)-beta-D-glucosidic linkages in cellulose, lichenin and cereal beta-D-glucans.. It participates in glycan metabolism; cellulose degradation. This enzyme catalyzes the endohydrolysis of 1,4-beta-glucosidic linkages in cellulose, lichenin and cereal beta-D-glucans. The chain is Endoglucanase C (celC) from Acetivibrio thermocellus (Hungateiclostridium thermocellum).